Reading from the N-terminus, the 78-residue chain is Acyl carrier protein (78 aa).

The Carrier domain maps to 1 to 76; sequence MALFEDIQAV…DVVKYIEDNK (76 aa). Ser36 carries the O-(pantetheine 4'-phosphoryl)serine modification.

This sequence belongs to the acyl carrier protein (ACP) family. Post-translationally, 4'-phosphopantetheine is transferred from CoA to a specific serine of apo-ACP by AcpS. This modification is essential for activity because fatty acids are bound in thioester linkage to the sulfhydryl of the prosthetic group.

It localises to the cytoplasm. Its pathway is lipid metabolism; fatty acid biosynthesis. Carrier of the growing fatty acid chain in fatty acid biosynthesis. This chain is Acyl carrier protein, found in Helicobacter pylori (strain J99 / ATCC 700824) (Campylobacter pylori J99).